A 791-amino-acid chain; its full sequence is Penicillin-binding protein 1A (791 aa).

Topologically, residues 1–6 (MYKSLF) are cytoplasmic. A helical; Signal-anchor for type II membrane protein transmembrane segment spans residues 7–27 (FCLKILALLFLIGCGIVAYII). The Periplasmic portion of the chain corresponds to 28–791 (YYYSRDLPDY…TEKDQSQEIY (764 aa)). The interval 49–220 (TRIYSRDGKL…SELNPEKNYA (172 aa)) is transglycosylase. The Proton donor; for transglycosylase activity role is filled by E87. Residues 398 to 711 (DVIVVEPVKD…SSVVLPIFID (314 aa)) form a transpeptidase region. The Acyl-ester intermediate; for transpeptidase activity role is filled by S457.

This sequence in the N-terminal section; belongs to the glycosyltransferase 51 family. It in the C-terminal section; belongs to the transpeptidase family.

Its subcellular location is the cell inner membrane. The catalysed reaction is [GlcNAc-(1-&gt;4)-Mur2Ac(oyl-L-Ala-gamma-D-Glu-L-Lys-D-Ala-D-Ala)](n)-di-trans,octa-cis-undecaprenyl diphosphate + beta-D-GlcNAc-(1-&gt;4)-Mur2Ac(oyl-L-Ala-gamma-D-Glu-L-Lys-D-Ala-D-Ala)-di-trans,octa-cis-undecaprenyl diphosphate = [GlcNAc-(1-&gt;4)-Mur2Ac(oyl-L-Ala-gamma-D-Glu-L-Lys-D-Ala-D-Ala)](n+1)-di-trans,octa-cis-undecaprenyl diphosphate + di-trans,octa-cis-undecaprenyl diphosphate + H(+). It catalyses the reaction Preferential cleavage: (Ac)2-L-Lys-D-Ala-|-D-Ala. Also transpeptidation of peptidyl-alanyl moieties that are N-acyl substituents of D-alanine.. Its pathway is cell wall biogenesis; peptidoglycan biosynthesis. Its function is as follows. Cell wall formation. Synthesis of cross-linked peptidoglycan from the lipid intermediates. The enzyme has a penicillin-insensitive transglycosylase N-terminal domain (formation of linear glycan strands) and a penicillin-sensitive transpeptidase C-terminal domain (cross-linking of the peptide subunits). This chain is Penicillin-binding protein 1A (mrcA), found in Rickettsia bellii (strain RML369-C).